A 176-amino-acid chain; its full sequence is NAD(P)H-quinone oxidoreductase subunit 6, chloroplastic (176 aa).

5 helical membrane passes run 10 to 30 (FLLV…VLLP), 33 to 53 (IFSA…YILA), 61 to 81 (AQLL…VMFM), 92 to 112 (LWTV…FSLI), and 152 to 172 (FFLP…GAIS).

Belongs to the complex I subunit 6 family. NDH is composed of at least 16 different subunits, 5 of which are encoded in the nucleus.

It is found in the plastid. Its subcellular location is the chloroplast thylakoid membrane. It catalyses the reaction a plastoquinone + NADH + (n+1) H(+)(in) = a plastoquinol + NAD(+) + n H(+)(out). The enzyme catalyses a plastoquinone + NADPH + (n+1) H(+)(in) = a plastoquinol + NADP(+) + n H(+)(out). In terms of biological role, NDH shuttles electrons from NAD(P)H:plastoquinone, via FMN and iron-sulfur (Fe-S) centers, to quinones in the photosynthetic chain and possibly in a chloroplast respiratory chain. The immediate electron acceptor for the enzyme in this species is believed to be plastoquinone. Couples the redox reaction to proton translocation, and thus conserves the redox energy in a proton gradient. This is NAD(P)H-quinone oxidoreductase subunit 6, chloroplastic (ndhG) from Arabis hirsuta (Hairy rock-cress).